The primary structure comprises 366 residues: Ferredoxin--NADP reductase (366 aa).

Residues aspartate 51, glutamine 59, tyrosine 64, valine 104, phenylalanine 139, aspartate 308, and threonine 349 each contribute to the FAD site.

This sequence belongs to the ferredoxin--NADP reductase type 2 family. Homodimer. The cofactor is FAD.

The catalysed reaction is 2 reduced [2Fe-2S]-[ferredoxin] + NADP(+) + H(+) = 2 oxidized [2Fe-2S]-[ferredoxin] + NADPH. This Polaromonas naphthalenivorans (strain CJ2) protein is Ferredoxin--NADP reductase.